We begin with the raw amino-acid sequence, 262 residues long: ATP synthase subunit a (262 aa).

6 helical membrane-spanning segments follow: residues 32-52 (IAFTNSAAWMALTTVLLAVFV), 98-118 (LFMFILFGNLLGLLPLGVLGI), 127-147 (FTITGVLAIISFSIVLIVGFW), 153-173 (FFSLFVPSGTPLPMIPIIFPI), 189-209 (LFVAMMAGHVLLKVLSSFVID), and 219-239 (LLVGAPSFILMIGISALEILV).

This sequence belongs to the ATPase A chain family. In terms of assembly, F-type ATPases have 2 components, CF(1) - the catalytic core - and CF(0) - the membrane proton channel. CF(1) has five subunits: alpha(3), beta(3), gamma(1), delta(1), epsilon(1). CF(0) has four main subunits: a, b, b' and c.

It is found in the cell inner membrane. In terms of biological role, key component of the proton channel; it plays a direct role in the translocation of protons across the membrane. The sequence is that of ATP synthase subunit a from Erythrobacter litoralis (strain HTCC2594).